A 94-amino-acid chain; its full sequence is Small ribosomal subunit protein bS18 (94 aa).

Belongs to the bacterial ribosomal protein bS18 family. Part of the 30S ribosomal subunit. Forms a tight heterodimer with protein bS6.

Functionally, binds as a heterodimer with protein bS6 to the central domain of the 16S rRNA, where it helps stabilize the platform of the 30S subunit. The polypeptide is Small ribosomal subunit protein bS18 (Leptothrix cholodnii (strain ATCC 51168 / LMG 8142 / SP-6) (Leptothrix discophora (strain SP-6))).